A 426-amino-acid polypeptide reads, in one-letter code: 3-phosphoshikimate 1-carboxyvinyltransferase (426 aa).

Lys22, Ser23, and Arg27 together coordinate 3-phosphoshikimate. Lys22 is a binding site for phosphoenolpyruvate. Gly96 and Arg124 together coordinate phosphoenolpyruvate. Residues Ser170, Ser171, Gln172, Ser198, Asp314, Asn337, and Lys341 each coordinate 3-phosphoshikimate. Gln172 contributes to the phosphoenolpyruvate binding site. Residue Asp314 is the Proton acceptor of the active site. Phosphoenolpyruvate is bound by residues Arg345, Arg387, and Lys412.

Belongs to the EPSP synthase family. In terms of assembly, monomer.

The protein resides in the cytoplasm. The enzyme catalyses 3-phosphoshikimate + phosphoenolpyruvate = 5-O-(1-carboxyvinyl)-3-phosphoshikimate + phosphate. The protein operates within metabolic intermediate biosynthesis; chorismate biosynthesis; chorismate from D-erythrose 4-phosphate and phosphoenolpyruvate: step 6/7. Functionally, catalyzes the transfer of the enolpyruvyl moiety of phosphoenolpyruvate (PEP) to the 5-hydroxyl of shikimate-3-phosphate (S3P) to produce enolpyruvyl shikimate-3-phosphate and inorganic phosphate. In Shewanella sediminis (strain HAW-EB3), this protein is 3-phosphoshikimate 1-carboxyvinyltransferase.